The primary structure comprises 406 residues: Phosphopentomutase (406 aa).

The Mn(2+) site is built by D10, D305, H310, D346, H347, and H358.

This sequence belongs to the phosphopentomutase family. It depends on Mn(2+) as a cofactor.

The protein resides in the cytoplasm. The catalysed reaction is 2-deoxy-alpha-D-ribose 1-phosphate = 2-deoxy-D-ribose 5-phosphate. It carries out the reaction alpha-D-ribose 1-phosphate = D-ribose 5-phosphate. The protein operates within carbohydrate degradation; 2-deoxy-D-ribose 1-phosphate degradation; D-glyceraldehyde 3-phosphate and acetaldehyde from 2-deoxy-alpha-D-ribose 1-phosphate: step 1/2. In terms of biological role, isomerase that catalyzes the conversion of deoxy-ribose 1-phosphate (dRib-1-P) and ribose 1-phosphate (Rib-1-P) to deoxy-ribose 5-phosphate (dRib-5-P) and ribose 5-phosphate (Rib-5-P), respectively. The sequence is that of Phosphopentomutase from Rhizobium etli (strain ATCC 51251 / DSM 11541 / JCM 21823 / NBRC 15573 / CFN 42).